A 1369-amino-acid chain; its full sequence is DNA-directed RNA polymerase subunit beta (1369 aa).

This sequence belongs to the RNA polymerase beta chain family. The RNAP catalytic core consists of 2 alpha, 1 beta, 1 beta' and 1 omega subunit. When a sigma factor is associated with the core the holoenzyme is formed, which can initiate transcription.

The catalysed reaction is RNA(n) + a ribonucleoside 5'-triphosphate = RNA(n+1) + diphosphate. Functionally, DNA-dependent RNA polymerase catalyzes the transcription of DNA into RNA using the four ribonucleoside triphosphates as substrates. This is DNA-directed RNA polymerase subunit beta from Solidesulfovibrio magneticus (strain ATCC 700980 / DSM 13731 / RS-1) (Desulfovibrio magneticus).